An 83-amino-acid chain; its full sequence is Small ribosomal subunit protein bS16c (83 aa).

The protein belongs to the bacterial ribosomal protein bS16 family.

Its subcellular location is the plastid. The protein resides in the chloroplast. The chain is Small ribosomal subunit protein bS16c from Chaetosphaeridium globosum (Charophycean green alga).